We begin with the raw amino-acid sequence, 263 residues long: uncharacterized protein (263 aa).

17-41 (GGGRGLGAAIALAFAQAGADVLIAS) lines the NAD(+) pocket. Ser-147 is a binding site for substrate. Tyr-160 functions as the Proton acceptor in the catalytic mechanism. An NAD(+)-binding site is contributed by Lys-164.

It belongs to the short-chain dehydrogenases/reductases (SDR) family.

This is an uncharacterized protein from Mycobacterium tuberculosis (strain CDC 1551 / Oshkosh).